We begin with the raw amino-acid sequence, 245 residues long: Phycocyanobilin:ferredoxin oxidoreductase (245 aa).

This sequence belongs to the HY2 family.

It carries out the reaction (2R,3Z)-phycocyanobilin + 4 oxidized [2Fe-2S]-[ferredoxin] = biliverdin IXalpha + 4 reduced [2Fe-2S]-[ferredoxin] + 4 H(+). Its function is as follows. Catalyzes the four-electron reduction of biliverdin IX-alpha (2-electron reduction at both the A and D rings); the reaction proceeds via an isolatable 2-electron intermediate, 181,182-dihydrobiliverdin. This chain is Phycocyanobilin:ferredoxin oxidoreductase, found in Microcystis aeruginosa (strain NIES-843 / IAM M-2473).